Reading from the N-terminus, the 133-residue chain is Holo-[acyl-carrier-protein] synthase (133 aa).

Mg(2+) contacts are provided by Asp8 and Glu58.

Belongs to the P-Pant transferase superfamily. AcpS family. It depends on Mg(2+) as a cofactor.

It localises to the cytoplasm. The catalysed reaction is apo-[ACP] + CoA = holo-[ACP] + adenosine 3',5'-bisphosphate + H(+). Its function is as follows. Transfers the 4'-phosphopantetheine moiety from coenzyme A to a Ser of acyl-carrier-protein. The polypeptide is Holo-[acyl-carrier-protein] synthase (Sphingopyxis alaskensis (strain DSM 13593 / LMG 18877 / RB2256) (Sphingomonas alaskensis)).